Here is a 548-residue protein sequence, read N- to C-terminus: CTP synthase (548 aa).

The amidoligase domain stretch occupies residues 1-276; the sequence is MPTELTDYDP…DQYVMEQLGL (276 aa). S25 contributes to the CTP binding site. A UTP-binding site is contributed by S25. 26-31 provides a ligand contact to ATP; the sequence is GLGKGI. Residue Y66 coordinates L-glutamine. D83 contacts ATP. The Mg(2+) site is built by D83 and E151. Residues 158-160, 197-202, and K233 each bind CTP; these read DIE and KTKPTQ. UTP is bound by residues 197–202 and K233; that span reads KTKPTQ. Residues 303–541 enclose the Glutamine amidotransferase type-1 domain; it reads DIALVGKYAM…VETILETTDT (239 aa). An L-glutamine-binding site is contributed by G363. C390 (nucleophile; for glutamine hydrolysis) is an active-site residue. Residues 391-394, E414, and R471 contribute to the L-glutamine site; that span reads LGFQ. Residues H514 and E516 contribute to the active site.

The protein belongs to the CTP synthase family. As to quaternary structure, homotetramer.

It catalyses the reaction UTP + L-glutamine + ATP + H2O = CTP + L-glutamate + ADP + phosphate + 2 H(+). It carries out the reaction L-glutamine + H2O = L-glutamate + NH4(+). The catalysed reaction is UTP + NH4(+) + ATP = CTP + ADP + phosphate + 2 H(+). It functions in the pathway pyrimidine metabolism; CTP biosynthesis via de novo pathway; CTP from UDP: step 2/2. Allosterically activated by GTP, when glutamine is the substrate; GTP has no effect on the reaction when ammonia is the substrate. The allosteric effector GTP functions by stabilizing the protein conformation that binds the tetrahedral intermediate(s) formed during glutamine hydrolysis. Inhibited by the product CTP, via allosteric rather than competitive inhibition. Functionally, catalyzes the ATP-dependent amination of UTP to CTP with either L-glutamine or ammonia as the source of nitrogen. Regulates intracellular CTP levels through interactions with the four ribonucleotide triphosphates. In Natronomonas pharaonis (strain ATCC 35678 / DSM 2160 / CIP 103997 / JCM 8858 / NBRC 14720 / NCIMB 2260 / Gabara) (Halobacterium pharaonis), this protein is CTP synthase.